The chain runs to 63 residues: Alpha-conotoxin-like PuSG1.2 (63 aa).

The N-terminal stretch at 1-21 is a signal peptide; it reads MRCLALLVVTLLLFTATATTG. Residues 22-43 constitute a propeptide that is removed on maturation; sequence ASNGMNAAASGEAPDSISLAVR. Disulfide bonds link C46/C52 and C47/C60. The lacks the Ser-Xaa-Pro motif that is crucial for potent interaction with nAChR stretch occupies residues 48-50; it reads PDP.

Belongs to the conotoxin A superfamily. Expressed by the salivary gland.

Its subcellular location is the secreted. Its function is as follows. Alpha-conopeptides-like may act on postsynaptic membranes, they bind to the nicotinic acetylcholine receptors (nAChR) and thus inhibit them. Has possibly a distinct nAChR binding mode from other alpha-conotoxins, due to a different three residue motif (lacks the Ser-Xaa-Pro motif). The sequence is that of Alpha-conotoxin-like PuSG1.2 from Conus pulicarius (Flea-bitten cone).